A 182-amino-acid chain; its full sequence is Dihydrofolate reductase (182 aa).

The DHFR domain occupies 3 to 180 (RFNLIVAVCE…IKFEYKILEK (178 aa)). Residues alanine 9 and 15-21 (GIGIRGD) contribute to the NADP(+) site. 29-34 (ELKYFS) lines the substrate pocket. 53-55 (RKT) serves as a coordination point for NADP(+). Arginine 69 contributes to the substrate binding site. Residues 75–77 (STT) and 113–120 (GGSGVYEE) each bind NADP(+).

This sequence belongs to the dihydrofolate reductase family. Monomer. Interacts with vg.

It carries out the reaction (6S)-5,6,7,8-tetrahydrofolate + NADP(+) = 7,8-dihydrofolate + NADPH + H(+). It participates in cofactor biosynthesis; tetrahydrofolate biosynthesis; 5,6,7,8-tetrahydrofolate from 7,8-dihydrofolate: step 1/1. By interacting with vestigial (vg), may control genes involved in DNA replication. In terms of biological role, key enzyme in folate metabolism. Catalyzes an essential reaction for de novo glycine and purine synthesis, and for DNA precursor synthesis. In Drosophila melanogaster (Fruit fly), this protein is Dihydrofolate reductase (Dhfr).